A 1143-amino-acid polypeptide reads, in one-letter code: Serine/threonine-protein kinase BRI1-like 2 (1143 aa).

The first 31 residues, 1 to 31 (MTTSPIRVRIRTRIQISFIFLLTHLSQSSSS), serve as a signal peptide directing secretion. Residues 32–756 (DQSSLKTDSL…GTRAASWANS (725 aa)) lie on the Extracellular side of the membrane. The short motif at 68-75 (CQFSGVTC) is the Cys pair 1 element. 24 LRR repeats span residues 77-101 (GGRV…AFTS), 102-125 (LDSL…LLLL), 126-150 (PLTL…FFSK), 151-175 (YSNL…LFLS), 177-200 (KKLQ…TIPL), 203-227 (CVSM…LINC), 228-250 (TNLK…SFGE), 251-275 (LKLL…IGDT), 277-299 (RSLQ…SLSS), 300-324 (CSWL…ILRS), 326-349 (GSLQ…ISAC), 351-373 (SLRI…LCPG), 374-398 (AASL…ISQC), 399-422 (SELR…IGNL), 424-446 (KLEQ…IGKL), 447-470 (QNLK…FFNC), 472-493 (NIEW…DFGI), 494-518 (LSRL…LGKC), 520-542 (TLVW…LGRQ), 570-594 (VGGL…KSCD), 610-634 (YQTI…IGEM), 635-660 (IALQ…QLKN), 662-681 (GVFD…SFSN), and 682-707 (LSFL…QLST). N-linked (GlcNAc...) asparagine glycans are attached at residues Asn-84 and Asn-118. N-linked (GlcNAc...) asparagine glycans are attached at residues Asn-163, Asn-188, Asn-226, and Asn-234. N-linked (GlcNAc...) asparagine glycosylation is found at Asn-288 and Asn-312. An N-linked (GlcNAc...) asparagine glycan is attached at Asn-412. Asn-469 carries N-linked (GlcNAc...) asparagine glycosylation. Asn-506 carries an N-linked (GlcNAc...) asparagine glycan. The N-linked (GlcNAc...) asparagine glycan is linked to Asn-681. A Cys pair 2 motif is present at residues 720-727 (CGVPLPEC). Residues 757–777 (IVLGVLISAASVCILIVWAIA) traverse the membrane as a helical segment. Topologically, residues 778 to 1143 (VRARRRDADD…NNSHSHSNSL (366 aa)) are cytoplasmic. Thr-835 bears the Phosphothreonine mark. The region spanning 838 to 1129 (FSAASMIGHG…LQVVASLREL (292 aa)) is the Protein kinase domain. ATP contacts are provided by residues 844 to 852 (IGHGGFGEV) and Lys-866. Tyr-911 is modified (phosphotyrosine). Asp-966 (proton acceptor) is an active-site residue. Phosphoserine is present on Ser-1001. Tyr-1009 bears the Phosphotyrosine mark.

It belongs to the protein kinase superfamily. Ser/Thr protein kinase family. In terms of assembly, interacts with TTL3. In terms of tissue distribution, expressed in provascular and procambial sites throughout plant development. Expressed throughout globe- to heart-staged embryos. Then, it is restricted to procambial cells by the late torpedo stage, and this pattern persists throughout the duration of embryo development. After germination, it is expressed not only in procambial cells throughout the plant but also in all lateral organ primordia before the onset of vascularization.

Its subcellular location is the cell membrane. It carries out the reaction L-seryl-[protein] + ATP = O-phospho-L-seryl-[protein] + ADP + H(+). It catalyses the reaction L-threonyl-[protein] + ATP = O-phospho-L-threonyl-[protein] + ADP + H(+). In terms of biological role, receptor with a serine/threonine-protein kinase activity, which may transduce extracellular spatial and temporal signals into downstream cell differentiation responses in provascular and procambial cells. In contrast to BRI1, BRL1 and BRL3, it does not bind brassinolide. The polypeptide is Serine/threonine-protein kinase BRI1-like 2 (Arabidopsis thaliana (Mouse-ear cress)).